The following is a 212-amino-acid chain: MSLFDKKHLVSPADALPGRNTPMPVATLHAVNGHSMTNVPDGMEIAIFAMGCFWGVERLFWQLPGVYSTAAGYTGGYTPNPTYREVCSGDTGHAEAVRIVYDPSVISYEQLLQVFWENHDPAQGMRQGNDHGTQYRSAIYPLTPEQDAAARASLERFQAAMLAADDDRRITTEIANATPFYYAEDDHQQYLHKNPYGYCGIGGIGVCLPPEA.

Cys-52 is a catalytic residue.

It belongs to the MsrA Met sulfoxide reductase family.

It carries out the reaction L-methionyl-[protein] + [thioredoxin]-disulfide + H2O = L-methionyl-(S)-S-oxide-[protein] + [thioredoxin]-dithiol. The enzyme catalyses [thioredoxin]-disulfide + L-methionine + H2O = L-methionine (S)-S-oxide + [thioredoxin]-dithiol. Functionally, has an important function as a repair enzyme for proteins that have been inactivated by oxidation. Catalyzes the reversible oxidation-reduction of methionine sulfoxide in proteins to methionine. The protein is Peptide methionine sulfoxide reductase MsrA of Escherichia coli O17:K52:H18 (strain UMN026 / ExPEC).